Reading from the N-terminus, the 292-residue chain is Geranyl diphosphate 2-C-methyltransferase (292 aa).

Belongs to the geranyl diphosphate 2-C-methyltransferase family. Mg(2+) serves as cofactor.

The catalysed reaction is (2E)-geranyl diphosphate + S-adenosyl-L-methionine = (E)-2-methylgeranyl diphosphate + S-adenosyl-L-homocysteine + H(+). Functionally, catalyzes the SAM-dependent methylation of geranyl diphosphate (GPP) to yield (E)-2-methylgeranyl diphosphate (2-MeGPP). This is Geranyl diphosphate 2-C-methyltransferase from Streptomyces coelicolor (strain ATCC BAA-471 / A3(2) / M145).